The following is a 277-amino-acid chain: F-actin-capping protein subunit beta isoforms 1 and 2 (277 aa).

Position 2 is an N-acetylserine (Ser2).

It belongs to the F-actin-capping protein beta subunit family. In terms of assembly, component of the F-actin capping complex, composed of a heterodimer of an alpha and a beta subunit. Component of the WASH complex. As to quaternary structure, component of the F-actin capping complex, composed of a heterodimer of an alpha and a beta subunit. Subunit of dynactin, a multiprotein complex part of a tripartite complex with dynein and a adapter, such as BICDL1, BICD2 or HOOK3. The dynactin complex is built around ACTR1A/ACTB filament and consists of an actin-related filament composed of a shoulder domain, a pointed end and a barbed end. Its length is defined by its flexible shoulder domain. Isoform 1 is detected in pectoral muscle, cardiac muscle and gizzard. Isoform 2 is detected in brain and liver (at protein level). Isoform 2 is the predominant isoform of nonmuscle tissues and isoform 1 is the predominant isoform of muscle tissues.

Its subcellular location is the cytoplasm. The protein resides in the myofibril. The protein localises to the sarcomere. It localises to the z line. It is found in the i band. Its subcellular location is the cytoskeleton. F-actin-capping proteins bind in a Ca(2+)-independent manner to the fast growing ends of actin filaments (barbed end) thereby blocking the exchange of subunits at these ends. Unlike other capping proteins (such as gelsolin and severin), these proteins do not sever actin filaments. May play a role in the regulation of cell morphology and cytoskeletal organization. In terms of biological role, forms, with CAPZB, the barbed end of the fast growing ends of actin filaments in the dynactin complex and stabilizes dynactin structure. The dynactin multiprotein complex activates the molecular motor dynein for ultra-processive transport along microtubules. The chain is F-actin-capping protein subunit beta isoforms 1 and 2 (CAPZB) from Gallus gallus (Chicken).